We begin with the raw amino-acid sequence, 220 residues long: Putative vesicle-associated membrane protein 726 (220 aa).

The Cytoplasmic segment spans residues 1–196 (MGQQSLIYSF…LWFENMKIKL (196 aa)). The 105-residue stretch at 10-114 (FVARGTVILA…SLNKEFGSKL (105 aa)) folds into the Longin domain. A v-SNARE coiled-coil homology domain is found at 130-190 (KLSKVKAQVT…TKMKRKLWFE (61 aa)). Residues 197 to 217 (IVFGIIVALILIIILSVCHGF) form a helical; Anchor for type IV membrane protein membrane-spanning segment. Residues 218–220 (KCT) are Vesicular-facing.

The protein belongs to the synaptobrevin family. Expressed in flowers, leaves, stems and roots.

It is found in the cell membrane. It localises to the early endosome membrane. In terms of biological role, involved in the targeting and/or fusion of transport vesicles to their target membrane. The chain is Putative vesicle-associated membrane protein 726 (VAMP726) from Arabidopsis thaliana (Mouse-ear cress).